Consider the following 259-residue polypeptide: tRNA pseudouridine synthase A (259 aa).

The Nucleophile role is filled by Asp-52. Tyr-110 lines the substrate pocket.

It belongs to the tRNA pseudouridine synthase TruA family. As to quaternary structure, homodimer.

The enzyme catalyses uridine(38/39/40) in tRNA = pseudouridine(38/39/40) in tRNA. In terms of biological role, formation of pseudouridine at positions 38, 39 and 40 in the anticodon stem and loop of transfer RNAs. This chain is tRNA pseudouridine synthase A, found in Coprothermobacter proteolyticus (strain ATCC 35245 / DSM 5265 / OCM 4 / BT).